Here is a 364-residue protein sequence, read N- to C-terminus: DNA replication and repair protein RecF (364 aa).

30 to 37 (GNNGQGKT) provides a ligand contact to ATP.

This sequence belongs to the RecF family.

The protein resides in the cytoplasm. Functionally, the RecF protein is involved in DNA metabolism; it is required for DNA replication and normal SOS inducibility. RecF binds preferentially to single-stranded, linear DNA. It also seems to bind ATP. The polypeptide is DNA replication and repair protein RecF (Citrifermentans bemidjiense (strain ATCC BAA-1014 / DSM 16622 / JCM 12645 / Bem) (Geobacter bemidjiensis)).